The sequence spans 134 residues: Small ribosomal subunit protein uS9c (134 aa).

Belongs to the universal ribosomal protein uS9 family.

The protein resides in the plastid. It localises to the chloroplast. The protein is Small ribosomal subunit protein uS9c (rps9) of Thalassiosira pseudonana (Marine diatom).